Consider the following 314-residue polypeptide: tRNA(Ile)-lysidine synthase, chloroplastic (314 aa).

31–36 (SGGQDS) is a binding site for ATP.

The protein belongs to the tRNA(Ile)-lysidine synthase family.

It localises to the plastid. It is found in the chloroplast. The catalysed reaction is cytidine(34) in tRNA(Ile2) + L-lysine + ATP = lysidine(34) in tRNA(Ile2) + AMP + diphosphate + H(+). In terms of biological role, ligates lysine onto the cytidine present at position 34 of the AUA codon-specific tRNA(Ile) that contains the anticodon CAU, in an ATP-dependent manner. Cytidine is converted to lysidine, thus changing the amino acid specificity of the tRNA from methionine to isoleucine. This chain is tRNA(Ile)-lysidine synthase, chloroplastic, found in Cyanidium caldarium (Red alga).